Consider the following 464-residue polypeptide: Heterogeneous nuclear ribonucleoprotein K (464 aa).

Position 1 is an N-acetylmethionine (Met-1). The segment at 1-37 is disordered; sequence METEQPEETFPNTETNGEFGKRPAEDMEEEQAFKRSR. The segment at 1–276 is necessary for interaction with DDX1; that stretch reads METEQPEETF…GRGGRPMPPS (276 aa). Residues 19–37 are compositionally biased toward basic and acidic residues; sequence FGKRPAEDMEEEQAFKRSR. Lys-34 is subject to N6-acetyllysine; alternate. Residue Lys-34 forms a Glycyl lysine isopeptide (Lys-Gly) (interchain with G-Cter in SUMO1); alternate linkage. Lys-34 is covalently cross-linked (Glycyl lysine isopeptide (Lys-Gly) (interchain with G-Cter in SUMO2); alternate). Ser-36 bears the Phosphoserine mark. Thr-39 carries the phosphothreonine modification. In terms of domain architecture, KH 1 spans 42–104; that stretch reads MVELRILLQS…ETIGEILKKI (63 aa). Residues Lys-52 and Lys-60 each participate in a glycyl lysine isopeptide (Lys-Gly) (interchain with G-Cter in SUMO2) cross-link. 2 consecutive repeat copies span residues 54–76 and 59–62. A 2 X 22 AA approximate repeats region spans residues 54 to 421; the sequence is AGAVIGKGGK…QIRHESGASI (368 aa). The interval 59 to 407 is 5 X 4 AA repeats of G-X-G-G; the sequence is GKGGKNIKAL…LAGSIIGKGG (349 aa). Residues Ser-75 and Ser-116 each carry the phosphoserine modification. One can recognise a KH 2 domain in the interval 144–209; the sequence is DCELRLLIHQ…DRVVECIKII (66 aa). Lys-163 participates in a covalent cross-link: Glycyl lysine isopeptide (Lys-Gly) (interchain with G-Cter in SUMO1); alternate. Lys-163 is covalently cross-linked (Glycyl lysine isopeptide (Lys-Gly) (interchain with G-Cter in SUMO2); alternate). An N6-acetyllysine modification is found at Lys-198. The segment at 209-337 is interaction with ZIK1; it reads ILDLISESPI…RPGDRYDGMV (129 aa). 2 positions are modified to phosphoserine: Ser-214 and Ser-216. Residue Lys-219 forms a Glycyl lysine isopeptide (Lys-Gly) (interchain with G-Cter in SUMO2); alternate linkage. Lys-219 carries the N6-succinyllysine; alternate modification. The interval 236–273 is RNA-binding RGG-box; sequence YGGFTMMFDDRRGRPVGFPMRGRGGFDRMPPGRGGRPM. 3 consecutive repeat copies span residues 245 to 250, 257 to 260, and 267 to 270. The tract at residues 245–329 is 2 X 6 AA approximate repeats; that stretch reads DRRGRPVGFP…LMAYDRRGRP (85 aa). The segment at 250 to 329 is disordered; sequence PVGFPMRGRG…LMAYDRRGRP (80 aa). Low complexity predominate over residues 252-266; it reads GFPMRGRGGFDRMPP. Over residues 276-285 the composition is skewed to basic and acidic residues; it reads SRRDYDDMSP. Ser-284 is subject to Phosphoserine. The stretch at 295-298 is one 3-4 repeat; it reads GRGG. Arg-316 bears the Omega-N-methylarginine mark. The 2-2 repeat unit spans residues 324–329; it reads DRRGRP. Residue Arg-377 is modified to Omega-N-methylarginine. Ser-379 carries the phosphoserine modification. The residue at position 380 (Tyr-380) is a Phosphotyrosine. The KH 3 domain maps to 387–451; that stretch reads IITTQVTIPK…DQIQNAQYLL (65 aa). 2 consecutive repeat copies span residues 399 to 421 and 404 to 407. Lys-405 bears the N6-acetyllysine; alternate mark. Residue Lys-405 forms a Glycyl lysine isopeptide (Lys-Gly) (interchain with G-Cter in SUMO2); alternate linkage. Ser-420 bears the Phosphoserine mark. Lys-422 participates in a covalent cross-link: Glycyl lysine isopeptide (Lys-Gly) (interchain with G-Cter in SUMO1); alternate. Lys-422 participates in a covalent cross-link: Glycyl lysine isopeptide (Lys-Gly) (interchain with G-Cter in SUMO2); alternate. Lys-422 participates in a covalent cross-link: Glycyl lysine isopeptide (Lys-Gly) (interchain with G-Cter in SUMO); alternate.

As to quaternary structure, identified in the spliceosome C complex. Interacts with ANKRD28, RBM42 and ZIK1. Interacts with DDX1. Interacts with MDM2; this interaction leads to ubiquitination and proteasomal degradation. Interacts with p53/TP53. Interacts with BRDT. Interacts with IVNS1ABP. Interacts with PPIA/CYPA. Part of a transcription inhibitory ribonucleoprotein complex composed at least of the circular RNA circZNF827, ZNF827 and HNRNPL. In terms of processing, sumoylated by CBX4. Sumoylation is increased upon DNA damage, such as that produced by doxorubicin, etoposide, UV light and camptothecin, due to enhanced CBX4 phosphorylation by HIPK2 under these conditions. Post-translationally, ubiquitinated by MDM2. Doxorubicin treatment does not affect monoubiquitination, but slightly decreases HNRNPK poly-ubiquitination. O-glycosylated (O-GlcNAcylated), in a cell cycle-dependent manner.

The protein resides in the cytoplasm. The protein localises to the nucleus. It is found in the nucleoplasm. Its subcellular location is the cell projection. It localises to the podosome. One of the major pre-mRNA-binding proteins. Binds tenaciously to poly(C) sequences. Likely to play a role in the nuclear metabolism of hnRNAs, particularly for pre-mRNAs that contain cytidine-rich sequences. Can also bind poly(C) single-stranded DNA. Plays an important role in p53/TP53 response to DNA damage, acting at the level of both transcription activation and repression. When sumoylated, acts as a transcriptional coactivator of p53/TP53, playing a role in p21/CDKN1A and 14-3-3 sigma/SFN induction. As far as transcription repression is concerned, acts by interacting with long intergenic RNA p21 (lincRNA-p21), a non-coding RNA induced by p53/TP53. This interaction is necessary for the induction of apoptosis, but not cell cycle arrest. As part of a ribonucleoprotein complex composed at least of ZNF827, HNRNPL and the circular RNA circZNF827 that nucleates the complex on chromatin, may negatively regulate the transcription of genes involved in neuronal differentiation. This is Heterogeneous nuclear ribonucleoprotein K (HNRNPK) from Bos taurus (Bovine).